The chain runs to 165 residues: UPF0114 protein in repA1-repA2 intergenic region (165 aa).

Transmembrane regions (helical) follow at residues 10 to 32 (YASR…LLTL), 53 to 75 (LILI…MVMF), and 136 to 155 (IMWC…GMAC).

This sequence belongs to the UPF0114 family.

Its subcellular location is the cell membrane. This chain is UPF0114 protein in repA1-repA2 intergenic region, found in Buchnera aphidicola subsp. Geoica urticularia.